Consider the following 502-residue polypeptide: Phenylacetaldehyde dehydrogenase (502 aa).

251-256 contributes to the NAD(+) binding site; the sequence is GSTEVG. Residues Glu273 and Cys307 contribute to the active site.

This sequence belongs to the aldehyde dehydrogenase family.

The catalysed reaction is 2-phenylacetaldehyde + NAD(+) + H2O = 2-phenylacetate + NADH + 2 H(+). Its pathway is aromatic compound metabolism. Its function is as follows. Phenylacetaldehyde dehydrogenase that catalyzes the last step in the aerobic styrene degradation pathway by mediating oxidation of phenylacetaldehyde to phenylacetic acid. In Pseudomonas fluorescens, this protein is Phenylacetaldehyde dehydrogenase (styD).